Reading from the N-terminus, the 268-residue chain is Probable 6-phosphogluconolactonase 1 (268 aa).

Belongs to the glucosamine/galactosamine-6-phosphate isomerase family. 6-phosphogluconolactonase subfamily.

The protein localises to the cytoplasm. Its subcellular location is the cytosol. The catalysed reaction is 6-phospho-D-glucono-1,5-lactone + H2O = 6-phospho-D-gluconate + H(+). It functions in the pathway carbohydrate degradation; pentose phosphate pathway; D-ribulose 5-phosphate from D-glucose 6-phosphate (oxidative stage): step 2/3. Catalyzes the hydrolysis of 6-phosphogluconolactone to 6-phosphogluconate. The sequence is that of Probable 6-phosphogluconolactonase 1 from Arabidopsis thaliana (Mouse-ear cress).